The following is a 443-amino-acid chain: Exodeoxyribonuclease 7 large subunit (443 aa).

The protein belongs to the XseA family. Heterooligomer composed of large and small subunits.

Its subcellular location is the cytoplasm. It catalyses the reaction Exonucleolytic cleavage in either 5'- to 3'- or 3'- to 5'-direction to yield nucleoside 5'-phosphates.. Its function is as follows. Bidirectionally degrades single-stranded DNA into large acid-insoluble oligonucleotides, which are then degraded further into small acid-soluble oligonucleotides. This is Exodeoxyribonuclease 7 large subunit from Vibrio vulnificus (strain YJ016).